Reading from the N-terminus, the 141-residue chain is uncharacterized protein (141 aa).

2 helical membrane passes run 12 to 32 (GIAG…TLVT) and 35 to 55 (PGRV…SATW).

Its subcellular location is the cell membrane. This is an uncharacterized protein from Mycobacterium tuberculosis (strain CDC 1551 / Oshkosh).